A 306-amino-acid chain; its full sequence is Putative dihydroorotate dehydrogenase A (fumarate) (306 aa).

FMN contacts are provided by residues S24 and 48–49 (KS). Residues K48, 72–76 (NAVGL), and N129 contribute to the substrate site. N129 contacts FMN. C132 functions as the Nucleophile in the catalytic mechanism. Positions 167 and 192 each coordinate FMN. Residue 193 to 194 (NS) coordinates substrate. Residues G218 and 244–245 (GG) each bind FMN.

Belongs to the dihydroorotate dehydrogenase family. Type 1 subfamily. Homodimer. The cofactor is FMN.

It localises to the cytoplasm. The enzyme catalyses (S)-dihydroorotate + fumarate = orotate + succinate. It functions in the pathway pyrimidine metabolism; UMP biosynthesis via de novo pathway. In terms of biological role, catalyzes the conversion of dihydroorotate to orotate with fumarate as the electron acceptor. The polypeptide is Putative dihydroorotate dehydrogenase A (fumarate) (pyrD) (Aeropyrum pernix (strain ATCC 700893 / DSM 11879 / JCM 9820 / NBRC 100138 / K1)).